Consider the following 546-residue polypeptide: Pyrophosphate--fructose 6-phosphate 1-phosphotransferase (546 aa).

A diphosphate-binding site is contributed by glycine 80. Residue aspartate 174 participates in Mg(2+) binding. Substrate-binding positions include 202-204 (TID), 241-242 (KY), 249-251 (MGR), glutamate 310, and 420-423 (YEGR). Aspartate 204 acts as the Proton acceptor in catalysis.

It belongs to the phosphofructokinase type A (PFKA) family. PPi-dependent PFK group II subfamily. Clade 'Long' sub-subfamily. Homodimer. The cofactor is Mg(2+). Mn(2+) is required as a cofactor.

It localises to the cytoplasm. The enzyme catalyses beta-D-fructose 6-phosphate + diphosphate = beta-D-fructose 1,6-bisphosphate + phosphate + H(+). The protein operates within carbohydrate degradation; glycolysis; D-glyceraldehyde 3-phosphate and glycerone phosphate from D-glucose: step 3/4. With respect to regulation, non-allosteric. Competitively inhibited by PPi, Pi and fructose 1,6-bisphosphate. In terms of biological role, catalyzes the phosphorylation of D-fructose 6-phosphate, the first committing step of glycolysis. Uses inorganic phosphate (PPi) as phosphoryl donor instead of ATP like common ATP-dependent phosphofructokinases (ATP-PFKs), which renders the reaction reversible, and can thus function both in glycolysis and gluconeogenesis. Consistently, PPi-PFK can replace the enzymes of both the forward (ATP-PFK) and reverse (fructose-bisphosphatase (FBPase)) reactions. This Entamoeba histolytica (strain ATCC 30459 / HM-1:IMSS / ABRM) protein is Pyrophosphate--fructose 6-phosphate 1-phosphotransferase.